Reading from the N-terminus, the 236-residue chain is 2-C-methyl-D-erythritol 4-phosphate cytidylyltransferase (236 aa).

It belongs to the IspD/TarI cytidylyltransferase family. IspD subfamily. As to quaternary structure, homodimer.

The catalysed reaction is 2-C-methyl-D-erythritol 4-phosphate + CTP + H(+) = 4-CDP-2-C-methyl-D-erythritol + diphosphate. The protein operates within isoprenoid biosynthesis; isopentenyl diphosphate biosynthesis via DXP pathway; isopentenyl diphosphate from 1-deoxy-D-xylulose 5-phosphate: step 2/6. Catalyzes the formation of 4-diphosphocytidyl-2-C-methyl-D-erythritol from CTP and 2-C-methyl-D-erythritol 4-phosphate (MEP). The protein is 2-C-methyl-D-erythritol 4-phosphate cytidylyltransferase of Salmonella heidelberg (strain SL476).